Consider the following 384-residue polypeptide: MSDEEEYSEEEEEVPVDTKPRHSVIVVEEKGDPEFVKRQEQKSSALDEQLKEYIAEWRKQRAKEEEDLKKLKDKQSKRKVMRADEEKRMAERKKQEEERRVREIEEKKQRDIEEKRRRLEEAEKKRQAMMQALKEQKQQKGPNFTIQKKDPSFNMSSAQIERNKTKEQLEEEKKISLSFRIKPLEIENLNVDKLKVKATELWDAIVKLETEKYDLEERQKRQDYDLKELKERQKQQLRHKALKKGLDPEALTGKYPPKIQVASKYERRVDTRSYDDKKKLFEGGWATLSSESNEKVWKSKYELFANRSKSKLPKWFGERPGKKKGDPESPEEEEVKADAGVDDELEEPTFEPEPEPEPEEEAAEEEAEEEEEEEEEEEEEEEEE.

A compositionally biased stretch (acidic residues) spans 1–15; the sequence is MSDEEEYSEEEEEVP. 4 disordered regions span residues 1 to 23, 61 to 169, 237 to 257, and 313 to 384; these read MSDE…PRHS, RAKE…KEQL, LRHK…KYPP, and PKWF…EEEE. Composition is skewed to basic and acidic residues over residues 61–74 and 81–126; these read RAKE…LKDK and MRAD…EKKR. The span at 316–327 shows a compositional bias: basic and acidic residues; the sequence is FGERPGKKKGDP. A compositionally biased stretch (acidic residues) spans 328-384; sequence ESPEEEEVKADAGVDDELEEPTFEPEPEPEPEEEAAEEEAEEEEEEEEEEEEEEEEE.

This sequence belongs to the troponin T family.

Its function is as follows. Troponin T is the tropomyosin-binding subunit of troponin, the thin filament regulatory complex which confers calcium-sensitivity to striated muscle actomyosin ATPase activity. This chain is Troponin T (TNT), found in Periplaneta americana (American cockroach).